Consider the following 272-residue polypeptide: 4-hydroxy-tetrahydrodipicolinate reductase (272 aa).

Glycine 12 to methionine 17 is an NAD(+) binding site. Position 39 (lysine 39) interacts with NADP(+). Residues glycine 102–threonine 104 and serine 126–tyrosine 129 each bind NAD(+). Histidine 159 (proton donor/acceptor) is an active-site residue. Residue histidine 160 participates in (S)-2,3,4,5-tetrahydrodipicolinate binding. The active-site Proton donor is lysine 163. Glycine 169–threonine 170 is a binding site for (S)-2,3,4,5-tetrahydrodipicolinate.

Belongs to the DapB family. As to quaternary structure, homotetramer.

It is found in the cytoplasm. It carries out the reaction (S)-2,3,4,5-tetrahydrodipicolinate + NAD(+) + H2O = (2S,4S)-4-hydroxy-2,3,4,5-tetrahydrodipicolinate + NADH + H(+). The enzyme catalyses (S)-2,3,4,5-tetrahydrodipicolinate + NADP(+) + H2O = (2S,4S)-4-hydroxy-2,3,4,5-tetrahydrodipicolinate + NADPH + H(+). It participates in amino-acid biosynthesis; L-lysine biosynthesis via DAP pathway; (S)-tetrahydrodipicolinate from L-aspartate: step 4/4. Catalyzes the conversion of 4-hydroxy-tetrahydrodipicolinate (HTPA) to tetrahydrodipicolinate. This chain is 4-hydroxy-tetrahydrodipicolinate reductase, found in Buchnera aphidicola subsp. Baizongia pistaciae (strain Bp).